A 201-amino-acid polypeptide reads, in one-letter code: Pyridoxine/pyridoxamine 5'-phosphate oxidase (201 aa).

Residues 49–54 (RMVLLK), 64–65 (YT), Lys71, and Gln93 contribute to the FMN site. Lys54 provides a ligand contact to substrate. Residues Tyr111, Arg115, and Ser119 each contribute to the substrate site. Residues 128-129 (QS) and Trp172 each bind FMN. 178-180 (RLH) provides a ligand contact to substrate. Arg182 is an FMN binding site.

It belongs to the pyridoxamine 5'-phosphate oxidase family. As to quaternary structure, homodimer. FMN is required as a cofactor.

The enzyme catalyses pyridoxamine 5'-phosphate + O2 + H2O = pyridoxal 5'-phosphate + H2O2 + NH4(+). The catalysed reaction is pyridoxine 5'-phosphate + O2 = pyridoxal 5'-phosphate + H2O2. Its pathway is cofactor metabolism; pyridoxal 5'-phosphate salvage; pyridoxal 5'-phosphate from pyridoxamine 5'-phosphate: step 1/1. The protein operates within cofactor metabolism; pyridoxal 5'-phosphate salvage; pyridoxal 5'-phosphate from pyridoxine 5'-phosphate: step 1/1. Its function is as follows. Catalyzes the oxidation of either pyridoxine 5'-phosphate (PNP) or pyridoxamine 5'-phosphate (PMP) into pyridoxal 5'-phosphate (PLP). The chain is Pyridoxine/pyridoxamine 5'-phosphate oxidase from Roseobacter denitrificans (strain ATCC 33942 / OCh 114) (Erythrobacter sp. (strain OCh 114)).